Here is an 871-residue protein sequence, read N- to C-terminus: Leucine--tRNA ligase (871 aa).

Positions 43 to 53 (PYPSGRIHIGH) match the 'HIGH' region motif. The 'KMSKS' region motif lies at 629–633 (KMSKS). K632 contacts ATP.

Belongs to the class-I aminoacyl-tRNA synthetase family.

The protein resides in the cytoplasm. The catalysed reaction is tRNA(Leu) + L-leucine + ATP = L-leucyl-tRNA(Leu) + AMP + diphosphate. In Chelativorans sp. (strain BNC1), this protein is Leucine--tRNA ligase.